A 554-amino-acid polypeptide reads, in one-letter code: Methyl-coenzyme M reductase II subunit alpha (554 aa).

A coenzyme F430-binding site is contributed by Q151. Coenzyme B is bound by residues R229, 260 to 261, and R274; that span reads KH. 2 residues coordinate coenzyme M: Y336 and Y447.

Belongs to the methyl-coenzyme M reductase alpha subunit family. In terms of assembly, MCR is a hexamer of two alpha, two beta, and two gamma chains, forming a dimer of heterotrimers. Requires coenzyme F430 as cofactor.

It catalyses the reaction coenzyme B + methyl-coenzyme M = methane + coenzyme M-coenzyme B heterodisulfide. It participates in one-carbon metabolism; methyl-coenzyme M reduction; methane from methyl-coenzyme M: step 1/1. Functionally, component of the methyl-coenzyme M reductase (MCR) I that catalyzes the reductive cleavage of methyl-coenzyme M (CoM-S-CH3 or 2-(methylthio)ethanesulfonate) using coenzyme B (CoB or 7-mercaptoheptanoylthreonine phosphate) as reductant which results in the production of methane and the mixed heterodisulfide of CoB and CoM (CoM-S-S-CoB). This is the final step in methanogenesis. The chain is Methyl-coenzyme M reductase II subunit alpha (mrtA) from Methanothermus fervidus (strain ATCC 43054 / DSM 2088 / JCM 10308 / V24 S).